We begin with the raw amino-acid sequence, 333 residues long: Perchlorate reductase subunit beta (333 aa).

Positions Leu-12–Gly-40 constitute a 4Fe-4S ferredoxin-type 1 domain. Positions 21, 24, 27, and 31 each coordinate [4Fe-4S] cluster. The tract at residues Lys-101 to Gly-121 is disordered. 4Fe-4S ferredoxin-type domains lie at Asn-128–Gln-159 and Gly-161–Val-190. [4Fe-4S] cluster contacts are provided by Cys-137, Cys-140, and Cys-145. Cys-149, Cys-170, and Cys-176 together coordinate [3Fe-4S] cluster. The [4Fe-4S] cluster site is built by Cys-180, Cys-197, Cys-200, Cys-212, and Cys-216.

In terms of assembly, heterotrimer of alpha, beta and gamma subunits. Requires [3Fe-4S] cluster as cofactor. It depends on [4Fe-4S] cluster as a cofactor.

It localises to the periplasm. Its function is as follows. Component of the perchlorate reductase that catalyzes the reduction of perchlorate to chlorite and allows anaerobic growth on perchlorate as the sole electron acceptor. The beta subunit may be responsible for electron transfer to the catalytic alpha subunit PcrA. The polypeptide is Perchlorate reductase subunit beta (pcrB) (Dechloromonas aromatica (strain RCB)).